Consider the following 720-residue polypeptide: Putative fatty acid oxidation complex trifunctional enzyme (720 aa).

The segment at 1 to 384 (MQNEIKKVCV…SWKYGPFELL (384 aa)) is 3-hydroxyacyl-CoA dehydrogenase. The interval 453–720 (FVITTKMNCL…TIEKLKAIVK (268 aa)) is enoyl-CoA hydratase/isomerase.

The protein in the N-terminal section; belongs to the 3-hydroxyacyl-CoA dehydrogenase family. It in the C-terminal section; belongs to the enoyl-CoA hydratase/isomerase family.

The enzyme catalyses a (3S)-3-hydroxyacyl-CoA + NAD(+) = a 3-oxoacyl-CoA + NADH + H(+). It catalyses the reaction a (3S)-3-hydroxyacyl-CoA = a (2E)-enoyl-CoA + H2O. It carries out the reaction a 4-saturated-(3S)-3-hydroxyacyl-CoA = a (3E)-enoyl-CoA + H2O. The catalysed reaction is a (3Z)-enoyl-CoA = a 4-saturated (2E)-enoyl-CoA. The enzyme catalyses a (3E)-enoyl-CoA = a 4-saturated (2E)-enoyl-CoA. The polypeptide is Putative fatty acid oxidation complex trifunctional enzyme (Rickettsia felis (strain ATCC VR-1525 / URRWXCal2) (Rickettsia azadi)).